Consider the following 831-residue polypeptide: Prickle-like protein 1 (831 aa).

The PET domain occupies 14–122; the sequence is FGCQRSSTSD…TIKLLSRAVM (109 aa). 3 LIM zinc-binding domains span residues 124–189, 189–249, and 249–313; these read AVCE…LLKP, PRCS…LYAE, and EYCE…EDVH. The tract at residues 313 to 342 is disordered; that stretch reads HASDSSDSAFQSARSRDSRRSVRMGKSSRS. A phosphoserine mark is found at Ser315, Ser591, and Ser594. 2 disordered regions span residues 663–688 and 763–831; these read FEERGSRSHHHRRRRSRKSRSDNALN and CSSS…CIIS. The span at 669–680 shows a compositional bias: basic residues; the sequence is RSHHHRRRRSRK. Ser683 is subject to Phosphoserine. Basic residues predominate over residues 815–831; sequence TKSKKKKGHKGKNCIIS. At Cys828 the chain carries Cysteine methyl ester. The S-farnesyl cysteine moiety is linked to residue Cys828. Positions 829-831 are cleaved as a propeptide — removed in mature form; sequence IIS.

The protein belongs to the prickle / espinas / testin family. In terms of assembly, interacts with REST. As to expression, expressed at highest levels in placenta and at lower levels in lung, liver, kidney and pancreas. Expressed in thalamus, hippocampus, cerebral cortex, and cerebellum (in neurons rather than glia).

Its subcellular location is the nucleus membrane. The protein resides in the cytoplasm. It localises to the cytosol. In terms of biological role, involved in the planar cell polarity pathway that controls convergent extension during gastrulation and neural tube closure. Convergent extension is a complex morphogenetic process during which cells elongate, move mediolaterally, and intercalate between neighboring cells, leading to convergence toward the mediolateral axis and extension along the anteroposterior axis. Necessary for nuclear localization of REST. May serve as nuclear receptor. The polypeptide is Prickle-like protein 1 (PRICKLE1) (Homo sapiens (Human)).